Here is a 242-residue protein sequence, read N- to C-terminus: Uridylate kinase (242 aa).

11–14 (KLSG) contributes to the ATP binding site. The segment at 19–24 (GEKGAG) is involved in allosteric activation by GTP. Gly-53 is a UMP binding site. The ATP site is built by Gly-54 and Arg-58. UMP-binding positions include Asp-73 and 134 to 141 (IGSPYFST). ATP contacts are provided by Asn-162, Tyr-168, and Asp-171.

Belongs to the UMP kinase family. Homohexamer.

It localises to the cytoplasm. The catalysed reaction is UMP + ATP = UDP + ADP. It participates in pyrimidine metabolism; CTP biosynthesis via de novo pathway; UDP from UMP (UMPK route): step 1/1. Allosterically activated by GTP. Inhibited by UTP. Its function is as follows. Catalyzes the reversible phosphorylation of UMP to UDP. This Streptococcus pyogenes serotype M2 (strain MGAS10270) protein is Uridylate kinase.